Here is a 343-residue protein sequence, read N- to C-terminus: MAGNCSWEAHPGNRNKMCPGLSEAPELYSRGFLTIEQIAMLPPPAVMNYIFLLLCLCGLVGNGLVLWFFGFSIKRNPFSIYFLHLASADVGYLFSKAVFSILNTGGFLGTFADYIRSVCRVLGLCMFLTGVSLLPAVSAERCASVIFPAWYWRRRPKRLSAVVCALLWVLSLLVTCLHNYFCVFLGRGAPGAACRHMDIFLGILLFLLCCPLMVLPCLALILHVECRARRRQRSAKLNHVILAMVSVFLVSSIYLGIDWFLFWVFQIPAPFPEYVTDLCICINSSAKPIVYFLAGRDKSQRLWEPLRVVFQRALRDGAELGEAGGSTPNTVTMEMQCPPGNAS.

The Extracellular segment spans residues 1–44; it reads MAGNCSWEAHPGNRNKMCPGLSEAPELYSRGFLTIEQIAMLPPP. Residue Asn4 is glycosylated (N-linked (GlcNAc...) asparagine). The helical transmembrane segment at 45 to 66 threads the bilayer; that stretch reads AVMNYIFLLLCLCGLVGNGLVL. The Cytoplasmic portion of the chain corresponds to 67–82; it reads WFFGFSIKRNPFSIYF. Residues 83–104 traverse the membrane as a helical segment; sequence LHLASADVGYLFSKAVFSILNT. The Extracellular portion of the chain corresponds to 105 to 123; the sequence is GGFLGTFADYIRSVCRVLG. A helical membrane pass occupies residues 124–144; the sequence is LCMFLTGVSLLPAVSAERCAS. Residues 145–160 are Cytoplasmic-facing; the sequence is VIFPAWYWRRRPKRLS. The helical transmembrane segment at 161–181 threads the bilayer; the sequence is AVVCALLWVLSLLVTCLHNYF. The Extracellular portion of the chain corresponds to 182-198; it reads CVFLGRGAPGAACRHMD. A helical membrane pass occupies residues 199 to 220; the sequence is IFLGILLFLLCCPLMVLPCLAL. The Cytoplasmic portion of the chain corresponds to 221-241; the sequence is ILHVECRARRRQRSAKLNHVI. The helical transmembrane segment at 242–263 threads the bilayer; sequence LAMVSVFLVSSIYLGIDWFLFW. The Extracellular portion of the chain corresponds to 264-273; that stretch reads VFQIPAPFPE. The helical transmembrane segment at 274-294 threads the bilayer; sequence YVTDLCICINSSAKPIVYFLA. The Cytoplasmic portion of the chain corresponds to 295-343; the sequence is GRDKSQRLWEPLRVVFQRALRDGAELGEAGGSTPNTVTMEMQCPPGNAS. Positions 320-343 are disordered; sequence LGEAGGSTPNTVTMEMQCPPGNAS.

It belongs to the G-protein coupled receptor 1 family. Mas subfamily.

It localises to the cell membrane. Functionally, orphan receptor. May bind to a neuropeptide and may regulate nociceptor function and/or development, including the sensation or modulation of pain. This Homo sapiens (Human) protein is Mas-related G-protein coupled receptor member F (MRGPRF).